The primary structure comprises 159 residues: NADH-quinone oxidoreductase subunit B (159 aa).

Cys-36, Cys-37, Cys-102, and Cys-132 together coordinate [4Fe-4S] cluster.

Belongs to the complex I 20 kDa subunit family. In terms of assembly, NDH-1 is composed of 14 different subunits. Subunits NuoB, C, D, E, F, and G constitute the peripheral sector of the complex. The cofactor is [4Fe-4S] cluster.

Its subcellular location is the cell inner membrane. The catalysed reaction is a quinone + NADH + 5 H(+)(in) = a quinol + NAD(+) + 4 H(+)(out). In terms of biological role, NDH-1 shuttles electrons from NADH, via FMN and iron-sulfur (Fe-S) centers, to quinones in the respiratory chain. Couples the redox reaction to proton translocation (for every two electrons transferred, four hydrogen ions are translocated across the cytoplasmic membrane), and thus conserves the redox energy in a proton gradient. This chain is NADH-quinone oxidoreductase subunit B, found in Delftia acidovorans (strain DSM 14801 / SPH-1).